The primary structure comprises 283 residues: 4-diphosphocytidyl-2-C-methyl-D-erythritol kinase (283 aa).

Residue Lys-12 is part of the active site. 99 to 109 (PLAAGIGGGSA) is a binding site for ATP. The active site involves Asp-141.

This sequence belongs to the GHMP kinase family. IspE subfamily.

The enzyme catalyses 4-CDP-2-C-methyl-D-erythritol + ATP = 4-CDP-2-C-methyl-D-erythritol 2-phosphate + ADP + H(+). It participates in isoprenoid biosynthesis; isopentenyl diphosphate biosynthesis via DXP pathway; isopentenyl diphosphate from 1-deoxy-D-xylulose 5-phosphate: step 3/6. In terms of biological role, catalyzes the phosphorylation of the position 2 hydroxy group of 4-diphosphocytidyl-2C-methyl-D-erythritol. The chain is 4-diphosphocytidyl-2-C-methyl-D-erythritol kinase from Sphingopyxis alaskensis (strain DSM 13593 / LMG 18877 / RB2256) (Sphingomonas alaskensis).